Here is a 541-residue protein sequence, read N- to C-terminus: CTP synthase (541 aa).

Residues 1-268 (MAKFIFITGG…AEIVCRRLGL (268 aa)) are amidoligase domain. Residue serine 13 participates in CTP binding. Serine 13 is a binding site for UTP. ATP-binding positions include 14–19 (GLGKGI) and aspartate 71. The Mg(2+) site is built by aspartate 71 and glutamate 141. CTP-binding positions include 148–150 (DIE), 189–194 (KTKPTQ), and lysine 225. UTP contacts are provided by residues 189–194 (KTKPTQ) and lysine 225. The 247-residue stretch at 293 to 539 (EIALVGKYVA…IKAALEYRAG (247 aa)) folds into the Glutamine amidotransferase type-1 domain. Glycine 359 serves as a coordination point for L-glutamine. The active-site Nucleophile; for glutamine hydrolysis is the cysteine 386. Residues 387-390 (MGMQ), glutamate 410, and arginine 467 contribute to the L-glutamine site. Residues histidine 512 and glutamate 514 contribute to the active site.

It belongs to the CTP synthase family. In terms of assembly, homotetramer.

The catalysed reaction is UTP + L-glutamine + ATP + H2O = CTP + L-glutamate + ADP + phosphate + 2 H(+). It carries out the reaction L-glutamine + H2O = L-glutamate + NH4(+). It catalyses the reaction UTP + NH4(+) + ATP = CTP + ADP + phosphate + 2 H(+). The protein operates within pyrimidine metabolism; CTP biosynthesis via de novo pathway; CTP from UDP: step 2/2. Its activity is regulated as follows. Allosterically activated by GTP, when glutamine is the substrate; GTP has no effect on the reaction when ammonia is the substrate. The allosteric effector GTP functions by stabilizing the protein conformation that binds the tetrahedral intermediate(s) formed during glutamine hydrolysis. Inhibited by the product CTP, via allosteric rather than competitive inhibition. Its function is as follows. Catalyzes the ATP-dependent amination of UTP to CTP with either L-glutamine or ammonia as the source of nitrogen. Regulates intracellular CTP levels through interactions with the four ribonucleotide triphosphates. This is CTP synthase from Symbiobacterium thermophilum (strain DSM 24528 / JCM 14929 / IAM 14863 / T).